The chain runs to 121 residues: Large ribosomal subunit protein uL14c (121 aa).

This sequence belongs to the universal ribosomal protein uL14 family. In terms of assembly, part of the 50S ribosomal subunit.

Its subcellular location is the plastid. It localises to the organellar chromatophore. Its function is as follows. Binds to 23S rRNA. This is Large ribosomal subunit protein uL14c from Paulinella chromatophora.